The following is a 255-amino-acid chain: 3-deoxy-manno-octulosonate cytidylyltransferase (255 aa).

Belongs to the KdsB family.

The protein resides in the cytoplasm. The enzyme catalyses 3-deoxy-alpha-D-manno-oct-2-ulosonate + CTP = CMP-3-deoxy-beta-D-manno-octulosonate + diphosphate. Its pathway is nucleotide-sugar biosynthesis; CMP-3-deoxy-D-manno-octulosonate biosynthesis; CMP-3-deoxy-D-manno-octulosonate from 3-deoxy-D-manno-octulosonate and CTP: step 1/1. The protein operates within bacterial outer membrane biogenesis; lipopolysaccharide biosynthesis. In terms of biological role, activates KDO (a required 8-carbon sugar) for incorporation into bacterial lipopolysaccharide in Gram-negative bacteria. The sequence is that of 3-deoxy-manno-octulosonate cytidylyltransferase from Xanthobacter autotrophicus (strain ATCC BAA-1158 / Py2).